A 132-amino-acid chain; its full sequence is Large ribosomal subunit protein uL14 (132 aa).

It belongs to the universal ribosomal protein uL14 family. As to quaternary structure, part of the 50S ribosomal subunit. Forms a cluster with proteins L3 and L24e, part of which may contact the 16S rRNA in 2 intersubunit bridges.

In terms of biological role, binds to 23S rRNA. Forms part of two intersubunit bridges in the 70S ribosome. In Methanococcus aeolicus (strain ATCC BAA-1280 / DSM 17508 / OCM 812 / Nankai-3), this protein is Large ribosomal subunit protein uL14.